The chain runs to 356 residues: Putative transposase y4zB (356 aa).

The span at 1–19 (MITTGTPTTRRSAAGTAGA) shows a compositional bias: low complexity. Disordered stretches follow at residues 1–54 (MITT…PLAD) and 334–356 (PPPVNPSHRRPRCSPHQMSFAYV).

Belongs to the transposase 11 family.

The chain is Putative transposase y4zB from Sinorhizobium fredii (strain NBRC 101917 / NGR234).